Here is a 146-residue protein sequence, read N- to C-terminus: Aspartate 1-decarboxylase (146 aa).

The active-site Schiff-base intermediate with substrate; via pyruvic acid is Ser-25. A Pyruvic acid (Ser) modification is found at Ser-25. Thr-57 is a binding site for substrate. The Proton donor role is filled by Tyr-58. 73 to 75 lines the substrate pocket; the sequence is GPA.

The protein belongs to the PanD family. Heterooctamer of four alpha and four beta subunits. Pyruvate is required as a cofactor. Post-translationally, is synthesized initially as an inactive proenzyme, which is activated by self-cleavage at a specific serine bond to produce a beta-subunit with a hydroxyl group at its C-terminus and an alpha-subunit with a pyruvoyl group at its N-terminus.

Its subcellular location is the cytoplasm. It catalyses the reaction L-aspartate + H(+) = beta-alanine + CO2. The protein operates within cofactor biosynthesis; (R)-pantothenate biosynthesis; beta-alanine from L-aspartate: step 1/1. Catalyzes the pyruvoyl-dependent decarboxylation of aspartate to produce beta-alanine. The polypeptide is Aspartate 1-decarboxylase (Salinibacter ruber (strain DSM 13855 / M31)).